The primary structure comprises 297 residues: Protoheme IX farnesyltransferase 1 (297 aa).

9 consecutive transmembrane segments (helical) span residues 23–43 (VVVL…RAGV), 45–65 (WSVL…AAVV), 93–113 (LPAL…LLAF), 117–137 (LTAW…TGFL), 145–165 (IVIG…AVSG), 171–191 (PLLL…ALAI), 216–236 (LHIL…YAIH), 241–261 (LYLA…WVLY), and 277–297 (IAYL…LLNL).

It belongs to the UbiA prenyltransferase family. Protoheme IX farnesyltransferase subfamily.

The protein localises to the cell inner membrane. The catalysed reaction is heme b + (2E,6E)-farnesyl diphosphate + H2O = Fe(II)-heme o + diphosphate. The protein operates within porphyrin-containing compound metabolism; heme O biosynthesis; heme O from protoheme: step 1/1. Its function is as follows. Converts heme B (protoheme IX) to heme O by substitution of the vinyl group on carbon 2 of heme B porphyrin ring with a hydroxyethyl farnesyl side group. This Pseudomonas putida (strain GB-1) protein is Protoheme IX farnesyltransferase 1.